A 232-amino-acid polypeptide reads, in one-letter code: Large ribosomal subunit protein uL1 (232 aa).

The protein belongs to the universal ribosomal protein uL1 family. In terms of assembly, part of the 50S ribosomal subunit.

Binds directly to 23S rRNA. The L1 stalk is quite mobile in the ribosome, and is involved in E site tRNA release. Functionally, protein L1 is also a translational repressor protein, it controls the translation of the L11 operon by binding to its mRNA. This chain is Large ribosomal subunit protein uL1, found in Xylella fastidiosa (strain 9a5c).